The primary structure comprises 545 residues: Ribulokinase (545 aa).

The protein belongs to the ribulokinase family.

The enzyme catalyses D-ribulose + ATP = D-ribulose 5-phosphate + ADP + H(+). It catalyses the reaction L-ribulose + ATP = L-ribulose 5-phosphate + ADP + H(+). The protein operates within carbohydrate degradation; L-arabinose degradation via L-ribulose; D-xylulose 5-phosphate from L-arabinose (bacterial route): step 2/3. In Staphylococcus aureus (strain Mu3 / ATCC 700698), this protein is Ribulokinase.